The chain runs to 142 residues: Putative transcriptional regulatory protein PF0535 (142 aa).

Belongs to the Tfx family.

In terms of biological role, putative transcriptional regulator. This Pyrococcus furiosus (strain ATCC 43587 / DSM 3638 / JCM 8422 / Vc1) protein is Putative transcriptional regulatory protein PF0535.